A 307-amino-acid chain; its full sequence is Junctional adhesion molecule 2A (307 aa).

The N-terminal stretch at 1-18 (MLVCVSLLILIHSVPVSP) is a signal peptide. The Ig-like V-type domain occupies 19–112 (VTVSSRNPKV…EVSAPSDSIS (94 aa)). Residues 19-226 (VTVSSRNPKV…FQTHDLNVAA (208 aa)) lie on the Extracellular side of the membrane. 2 disulfide bridges follow: cysteine 40-cysteine 102 and cysteine 147-cysteine 197. The 100-residue stretch at 126-225 (PQTPSCDVPS…TFQTHDLNVA (100 aa)) folds into the Ig-like C2-type domain. The helical transmembrane segment at 227–247 (VVSAVVLVCVILFLCAFGVCL) threads the bilayer. Residues 248–307 (AHRQGYFSRHRGRSFWIPHCHGVTHISSQNLNPSEHTQHSGYSHPPKEPQDFKHTQSFML) lie on the Cytoplasmic side of the membrane. The segment covering 278–288 (LNPSEHTQHSG) has biased composition (polar residues). Positions 278-307 (LNPSEHTQHSGYSHPPKEPQDFKHTQSFML) are disordered. Over residues 292–301 (PPKEPQDFKH) the composition is skewed to basic and acidic residues.

The protein belongs to the immunoglobulin superfamily.

Its subcellular location is the cell membrane. The protein resides in the cell junction. The protein localises to the tight junction. Its function is as follows. Junctional adhesion protein that mediates heterotypic cell-cell interactions to regulate different cellular processes. During myogenesis, it is involved in myocyte fusion through the binding of jam3b on neighboring myocytes. This Danio rerio (Zebrafish) protein is Junctional adhesion molecule 2A (jam2a).